Consider the following 631-residue polypeptide: Probable potassium transport system protein Kup 1 (631 aa).

A run of 12 helical transmembrane segments spans residues 17-37 (LALG…LYAL), 55-75 (LSLI…MIIF), 101-121 (PLFY…GMLT), 140-160 (LYPY…SLQA), 166-186 (IGYL…ILGI), 217-237 (FLLG…ADIG), 249-269 (FFIA…NLIV), 277-297 (PFFM…ATVA), 338-358 (IYVP…CLAF), 370-390 (IAVN…AVSI), 395-415 (TFNV…FLGA), and 420-440 (FITG…IMYS).

Belongs to the HAK/KUP transporter (TC 2.A.72) family.

It is found in the cell inner membrane. The catalysed reaction is K(+)(in) + H(+)(in) = K(+)(out) + H(+)(out). In terms of biological role, transport of potassium into the cell. Likely operates as a K(+):H(+) symporter. The sequence is that of Probable potassium transport system protein Kup 1 from Legionella pneumophila (strain Corby).